Consider the following 488-residue polypeptide: Sucrose phosphorylase (488 aa).

Sucrose-binding positions include Asp50, His88, 191–193 (RLD), Glu233, 290–291 (HD), 341–344 (DLYQ), and Arg398. Asp193 functions as the Nucleophile in the catalytic mechanism. Glu233 acts as the Proton donor in catalysis.

It belongs to the glycosyl hydrolase 13 family. Sucrose phosphorylase subfamily.

The enzyme catalyses sucrose + phosphate = D-fructose + alpha-D-glucose 1-phosphate. The sequence is that of Sucrose phosphorylase from Agrobacterium vitis (Rhizobium vitis).